The chain runs to 194 residues: ATP-dependent Clp protease proteolytic subunit (194 aa).

Ser-97 functions as the Nucleophile in the catalytic mechanism. Residue His-122 is part of the active site.

It belongs to the peptidase S14 family. In terms of assembly, fourteen ClpP subunits assemble into 2 heptameric rings which stack back to back to give a disk-like structure with a central cavity, resembling the structure of eukaryotic proteasomes.

It localises to the cytoplasm. It catalyses the reaction Hydrolysis of proteins to small peptides in the presence of ATP and magnesium. alpha-casein is the usual test substrate. In the absence of ATP, only oligopeptides shorter than five residues are hydrolyzed (such as succinyl-Leu-Tyr-|-NHMec, and Leu-Tyr-Leu-|-Tyr-Trp, in which cleavage of the -Tyr-|-Leu- and -Tyr-|-Trp bonds also occurs).. Cleaves peptides in various proteins in a process that requires ATP hydrolysis. Has a chymotrypsin-like activity. Plays a major role in the degradation of misfolded proteins. In Lactobacillus helveticus (strain DPC 4571), this protein is ATP-dependent Clp protease proteolytic subunit.